The primary structure comprises 251 residues: L-ascorbate peroxidase 2, cytosolic (251 aa).

H43 serves as the catalytic Proton acceptor. H163 is a heme b binding site. K(+) is bound by residues T164, T180, N182, I185, and D187.

Belongs to the peroxidase family. Ascorbate peroxidase subfamily. Requires heme b as cofactor. Detected in bundle sheath cells, the photosynthetic cells that surround the phloem and xylem.

The protein localises to the cytoplasm. The enzyme catalyses L-ascorbate + H2O2 = L-dehydroascorbate + 2 H2O. Its function is as follows. Plays a key role in hydrogen peroxide removal. The protein is L-ascorbate peroxidase 2, cytosolic of Arabidopsis thaliana (Mouse-ear cress).